A 164-amino-acid chain; its full sequence is Ribosome-binding factor A (164 aa).

This sequence belongs to the RbfA family. Monomer. Binds 30S ribosomal subunits, but not 50S ribosomal subunits or 70S ribosomes.

Its subcellular location is the cytoplasm. Functionally, one of several proteins that assist in the late maturation steps of the functional core of the 30S ribosomal subunit. Associates with free 30S ribosomal subunits (but not with 30S subunits that are part of 70S ribosomes or polysomes). Required for efficient processing of 16S rRNA. May interact with the 5'-terminal helix region of 16S rRNA. The polypeptide is Ribosome-binding factor A (Caulobacter sp. (strain K31)).